We begin with the raw amino-acid sequence, 72 residues long: MSKEDSIEVTGTVLEKFPSGLFSVQLEHERVVLAHLAGRLRRNRIRVLAGDKVTLELSPYDLTKGRITFRHR.

The 72-residue stretch at 1 to 72 folds into the S1-like domain; the sequence is MSKEDSIEVT…TKGRITFRHR (72 aa).

Belongs to the IF-1 family. As to quaternary structure, component of the 30S ribosomal translation pre-initiation complex which assembles on the 30S ribosome in the order IF-2 and IF-3, IF-1 and N-formylmethionyl-tRNA(fMet); mRNA recruitment can occur at any time during PIC assembly.

Its subcellular location is the cytoplasm. In terms of biological role, one of the essential components for the initiation of protein synthesis. Stabilizes the binding of IF-2 and IF-3 on the 30S subunit to which N-formylmethionyl-tRNA(fMet) subsequently binds. Helps modulate mRNA selection, yielding the 30S pre-initiation complex (PIC). Upon addition of the 50S ribosomal subunit IF-1, IF-2 and IF-3 are released leaving the mature 70S translation initiation complex. This Solibacter usitatus (strain Ellin6076) protein is Translation initiation factor IF-1.